The sequence spans 105 residues: Insulin-like peptide 7 (105 aa).

The signal sequence occupies residues methionine 1–glutamine 18. The propeptide occupies tyrosine 19–lysine 57. Disulfide bonds link cysteine 61/cysteine 90, cysteine 73/cysteine 103, cysteine 77/cysteine 104, and cysteine 89/cysteine 94.

Belongs to the insulin family.

Its subcellular location is the secreted. Functionally, insulin-like peptide which plays a role in ageing as a consequence of daf-16 activity. This chain is Insulin-like peptide 7, found in Caenorhabditis elegans.